The following is a 294-amino-acid chain: Acetyl-coenzyme A carboxylase carboxyl transferase subunit beta (294 aa).

The CoA carboxyltransferase N-terminal domain occupies I25–E294. C29, C32, C48, and C51 together coordinate Zn(2+). A C4-type zinc finger spans residues C29–C51.

It belongs to the AccD/PCCB family. Acetyl-CoA carboxylase is a heterohexamer composed of biotin carboxyl carrier protein (AccB), biotin carboxylase (AccC) and two subunits each of ACCase subunit alpha (AccA) and ACCase subunit beta (AccD). Zn(2+) is required as a cofactor.

Its subcellular location is the cytoplasm. It catalyses the reaction N(6)-carboxybiotinyl-L-lysyl-[protein] + acetyl-CoA = N(6)-biotinyl-L-lysyl-[protein] + malonyl-CoA. The protein operates within lipid metabolism; malonyl-CoA biosynthesis; malonyl-CoA from acetyl-CoA: step 1/1. Its function is as follows. Component of the acetyl coenzyme A carboxylase (ACC) complex. Biotin carboxylase (BC) catalyzes the carboxylation of biotin on its carrier protein (BCCP) and then the CO(2) group is transferred by the transcarboxylase to acetyl-CoA to form malonyl-CoA. The polypeptide is Acetyl-coenzyme A carboxylase carboxyl transferase subunit beta (Blochmanniella pennsylvanica (strain BPEN)).